A 785-amino-acid polypeptide reads, in one-letter code: Endonuclease MutS2 (785 aa).

334-341 is an ATP binding site; it reads GPNTGGKT. Residues 710 to 785 form the Smr domain; that stretch reads LDLRGQRYDE…GNGATIVKLK (76 aa).

This sequence belongs to the DNA mismatch repair MutS family. MutS2 subfamily. Homodimer. Binds to stalled ribosomes, contacting rRNA.

In terms of biological role, endonuclease that is involved in the suppression of homologous recombination and thus may have a key role in the control of bacterial genetic diversity. Acts as a ribosome collision sensor, splitting the ribosome into its 2 subunits. Detects stalled/collided 70S ribosomes which it binds and splits by an ATP-hydrolysis driven conformational change. Acts upstream of the ribosome quality control system (RQC), a ribosome-associated complex that mediates the extraction of incompletely synthesized nascent chains from stalled ribosomes and their subsequent degradation. Probably generates substrates for RQC. This chain is Endonuclease MutS2, found in Lactobacillus helveticus (strain DPC 4571).